A 620-amino-acid polypeptide reads, in one-letter code: Mitochondrial Rho GTPase 2 (620 aa).

At 1 to 594 the chain is on the cytoplasmic side; the sequence is MRRDVRILLL…ELHPTSFWLR (594 aa). The Miro 1 domain occupies 2 to 168; it reads RRDVRILLLG…FYYAQKAVLH (167 aa). GTP-binding residues include Gly16, Lys17, Thr18, and Ser19. Thr18 lines the Mg(2+) pocket. Asp57 is a binding site for Mg(2+). Ser59 is a GTP binding site. Lys96 is covalently cross-linked (Glycyl lysine isopeptide (Lys-Gly) (interchain with G-Cter in ubiquitin)). GTP is bound by residues Asn118, Lys119, Asp121, Ala149, and Lys150. Lys119 participates in a covalent cross-link: Glycyl lysine isopeptide (Lys-Gly) (interchain with G-Cter in ubiquitin). Residue Lys164 forms a Glycyl lysine isopeptide (Lys-Gly) (interchain with G-Cter in ubiquitin) linkage. 2 EF-hand domains span residues 184–219 and 304–339; these read ACAQ…CFGH and RGYQ…FSGA. Residues Asp197, Asp199, Asp201, Glu208, Asp317, Asp319, Asp321, and Glu328 each contribute to the Ca(2+) site. One can recognise a Miro 2 domain in the interval 415–578; that stretch reads RSVLMCKVLG…FTQLATMATF (164 aa). 5 residues coordinate GTP: Gly427, Gly429, Lys430, Ser431, and Ala432. Ser431 is a Mg(2+) binding site. Glu473 is a binding site for Mg(2+). Lys527, Asp529, and Cys558 together coordinate GTP. The chain crosses the membrane as a helical; Anchor for type IV membrane protein span at residues 595–617; it reads GVLVAVGTAVAAVLSFSLYRVLV. Residues 618-620 lie on the Mitochondrial intermembrane side of the membrane; sequence KSR.

This sequence belongs to the mitochondrial Rho GTPase family. Homodimer. Interacts with the kinesin-binding proteins TRAK1/OIP106 and TRAK2/GRIF1, forming a link between mitochondria and the trafficking apparatus of the microtubules. Interacts with ARMCX3. Found in a complex with KIF5B, OGT, RHOT1 and TRAK1. Post-translationally, ubiquitinated by PRKN in a PINK1-dependent manner, leading to its degradation. As to expression, ubiquitously expressed.

Its subcellular location is the mitochondrion outer membrane. The enzyme catalyses GTP + H2O = GDP + phosphate + H(+). It catalyses the reaction ATP + H2O = ADP + phosphate + H(+). The catalysed reaction is UTP + H2O = UDP + phosphate + H(+). Functionally, atypical mitochondrial nucleoside-triphosphatase (NTPase) involved in mitochondrial trafficking. Probably involved in control of anterograde transport of mitochondria and their subcellular distribution. Can hydrolyze GTP, ATP and UTP. The chain is Mitochondrial Rho GTPase 2 (Rhot2) from Mus musculus (Mouse).